A 700-amino-acid chain; its full sequence is Elongation factor G (700 aa).

The tr-type G domain occupies 10–286 (NKVRNIGIMA…AVIDYLPNPL (277 aa)). GTP-binding positions include 19-26 (AHIDAGKT), 83-87 (DTPGH), and 137-140 (NKMD).

It belongs to the TRAFAC class translation factor GTPase superfamily. Classic translation factor GTPase family. EF-G/EF-2 subfamily.

The protein resides in the cytoplasm. In terms of biological role, catalyzes the GTP-dependent ribosomal translocation step during translation elongation. During this step, the ribosome changes from the pre-translocational (PRE) to the post-translocational (POST) state as the newly formed A-site-bound peptidyl-tRNA and P-site-bound deacylated tRNA move to the P and E sites, respectively. Catalyzes the coordinated movement of the two tRNA molecules, the mRNA and conformational changes in the ribosome. The polypeptide is Elongation factor G (Rhodococcus jostii (strain RHA1)).